Here is a 146-residue protein sequence, read N- to C-terminus: Myoglobin (146 aa).

Residues Gly2–Lys141 form the Globin domain. His60 is a nitrite binding site. His60 contributes to the O2 binding site. His89 is a heme b binding site.

Belongs to the globin family. Monomeric.

The protein resides in the cytoplasm. The protein localises to the sarcoplasm. The catalysed reaction is Fe(III)-heme b-[protein] + nitric oxide + H2O = Fe(II)-heme b-[protein] + nitrite + 2 H(+). It carries out the reaction H2O2 + AH2 = A + 2 H2O. Functionally, monomeric heme protein which primary function is to store oxygen and facilitate its diffusion within muscle tissues. Reversibly binds oxygen through a pentacoordinated heme iron and enables its timely and efficient release as needed during periods of heightened demand. Depending on the oxidative conditions of tissues and cells, and in addition to its ability to bind oxygen, it also has a nitrite reductase activity whereby it regulates the production of bioactive nitric oxide. Under stress conditions, like hypoxia and anoxia, it also protects cells against reactive oxygen species thanks to its pseudoperoxidase activity. The sequence is that of Myoglobin (mb) from Tetraodon nigroviridis (Spotted green pufferfish).